The following is a 93-amino-acid chain: CRISPR-associated endoribonuclease Cas2 1 (93 aa).

Aspartate 8 contributes to the Mg(2+) binding site.

It belongs to the CRISPR-associated endoribonuclease Cas2 protein family. As to quaternary structure, homodimer, forms a heterotetramer with a Cas1 homodimer. Requires Mg(2+) as cofactor.

CRISPR (clustered regularly interspaced short palindromic repeat), is an adaptive immune system that provides protection against mobile genetic elements (viruses, transposable elements and conjugative plasmids). CRISPR clusters contain sequences complementary to antecedent mobile elements and target invading nucleic acids. CRISPR clusters are transcribed and processed into CRISPR RNA (crRNA). Functions as a ssRNA-specific endoribonuclease. Involved in the integration of spacer DNA into the CRISPR cassette. In Chloroflexus aurantiacus (strain ATCC 29366 / DSM 635 / J-10-fl), this protein is CRISPR-associated endoribonuclease Cas2 1.